Reading from the N-terminus, the 181-residue chain is ATP synthase subunit delta (181 aa).

This sequence belongs to the ATPase delta chain family. In terms of assembly, F-type ATPases have 2 components, F(1) - the catalytic core - and F(0) - the membrane proton channel. F(1) has five subunits: alpha(3), beta(3), gamma(1), delta(1), epsilon(1). F(0) has three main subunits: a(1), b(2) and c(10-14). The alpha and beta chains form an alternating ring which encloses part of the gamma chain. F(1) is attached to F(0) by a central stalk formed by the gamma and epsilon chains, while a peripheral stalk is formed by the delta and b chains.

It is found in the cell inner membrane. In terms of biological role, f(1)F(0) ATP synthase produces ATP from ADP in the presence of a proton or sodium gradient. F-type ATPases consist of two structural domains, F(1) containing the extramembraneous catalytic core and F(0) containing the membrane proton channel, linked together by a central stalk and a peripheral stalk. During catalysis, ATP synthesis in the catalytic domain of F(1) is coupled via a rotary mechanism of the central stalk subunits to proton translocation. Functionally, this protein is part of the stalk that links CF(0) to CF(1). It either transmits conformational changes from CF(0) to CF(1) or is implicated in proton conduction. This is ATP synthase subunit delta from Fervidobacterium nodosum (strain ATCC 35602 / DSM 5306 / Rt17-B1).